Here is a 222-residue protein sequence, read N- to C-terminus: Ribosomal RNA small subunit methyltransferase I (222 aa).

Belongs to the methyltransferase superfamily. RsmI family.

The protein localises to the cytoplasm. It catalyses the reaction cytidine(1402) in 16S rRNA + S-adenosyl-L-methionine = 2'-O-methylcytidine(1402) in 16S rRNA + S-adenosyl-L-homocysteine + H(+). In terms of biological role, catalyzes the 2'-O-methylation of the ribose of cytidine 1402 (C1402) in 16S rRNA. The polypeptide is Ribosomal RNA small subunit methyltransferase I (Thermotoga maritima (strain ATCC 43589 / DSM 3109 / JCM 10099 / NBRC 100826 / MSB8)).